The sequence spans 152 residues: AIG2-like protein D (152 aa).

Residue 13-18 (YGSLMA) coordinates substrate. Glu-81 (proton acceptor) is an active-site residue.

Belongs to the gamma-glutamylcyclotransferase family. As to expression, expressed mainly in leaves.

Its function is as follows. Putative gamma-glutamylcyclotransferase. The sequence is that of AIG2-like protein D from Arabidopsis thaliana (Mouse-ear cress).